A 402-amino-acid polypeptide reads, in one-letter code: 4-hydroxy-3-methylbut-2-enyl diphosphate reductase (402 aa).

Cysteine 66 contributes to the [4Fe-4S] cluster binding site. Histidine 96 serves as a coordination point for (2E)-4-hydroxy-3-methylbut-2-enyl diphosphate. Residue histidine 96 coordinates dimethylallyl diphosphate. Histidine 96 is an isopentenyl diphosphate binding site. Residue cysteine 157 coordinates [4Fe-4S] cluster. Histidine 185 lines the (2E)-4-hydroxy-3-methylbut-2-enyl diphosphate pocket. Residue histidine 185 coordinates dimethylallyl diphosphate. Histidine 185 is an isopentenyl diphosphate binding site. Glutamate 187 serves as the catalytic Proton donor. Threonine 250 is a binding site for (2E)-4-hydroxy-3-methylbut-2-enyl diphosphate. Position 288 (cysteine 288) interacts with [4Fe-4S] cluster. Positions 317, 318, 319, and 379 each coordinate (2E)-4-hydroxy-3-methylbut-2-enyl diphosphate. Dimethylallyl diphosphate is bound by residues serine 317, serine 318, asparagine 319, and serine 379. 4 residues coordinate isopentenyl diphosphate: serine 317, serine 318, asparagine 319, and serine 379.

This sequence belongs to the IspH family. [4Fe-4S] cluster is required as a cofactor.

The enzyme catalyses isopentenyl diphosphate + 2 oxidized [2Fe-2S]-[ferredoxin] + H2O = (2E)-4-hydroxy-3-methylbut-2-enyl diphosphate + 2 reduced [2Fe-2S]-[ferredoxin] + 2 H(+). It catalyses the reaction dimethylallyl diphosphate + 2 oxidized [2Fe-2S]-[ferredoxin] + H2O = (2E)-4-hydroxy-3-methylbut-2-enyl diphosphate + 2 reduced [2Fe-2S]-[ferredoxin] + 2 H(+). The protein operates within isoprenoid biosynthesis; dimethylallyl diphosphate biosynthesis; dimethylallyl diphosphate from (2E)-4-hydroxy-3-methylbutenyl diphosphate: step 1/1. It functions in the pathway isoprenoid biosynthesis; isopentenyl diphosphate biosynthesis via DXP pathway; isopentenyl diphosphate from 1-deoxy-D-xylulose 5-phosphate: step 6/6. Its function is as follows. Catalyzes the conversion of 1-hydroxy-2-methyl-2-(E)-butenyl 4-diphosphate (HMBPP) into a mixture of isopentenyl diphosphate (IPP) and dimethylallyl diphosphate (DMAPP). Acts in the terminal step of the DOXP/MEP pathway for isoprenoid precursor biosynthesis. This Trichormus variabilis (strain ATCC 29413 / PCC 7937) (Anabaena variabilis) protein is 4-hydroxy-3-methylbut-2-enyl diphosphate reductase.